A 375-amino-acid polypeptide reads, in one-letter code: Alanine racemase (375 aa).

Residue Lys35 is the Proton acceptor; specific for D-alanine of the active site. Position 35 is an N6-(pyridoxal phosphate)lysine (Lys35). A substrate-binding site is contributed by Arg130. The active-site Proton acceptor; specific for L-alanine is Tyr253. Met305 contacts substrate.

It belongs to the alanine racemase family. It depends on pyridoxal 5'-phosphate as a cofactor.

The enzyme catalyses L-alanine = D-alanine. It functions in the pathway amino-acid biosynthesis; D-alanine biosynthesis; D-alanine from L-alanine: step 1/1. Functionally, catalyzes the interconversion of L-alanine and D-alanine. May also act on other amino acids. The polypeptide is Alanine racemase (alr) (Ralstonia nicotianae (strain ATCC BAA-1114 / GMI1000) (Ralstonia solanacearum)).